Here is a 240-residue protein sequence, read N- to C-terminus: Fatty acid metabolism regulator protein (240 aa).

The HTH gntR-type domain maps to 6-74 (KGPASFAEKY…HGKPTRVNNF (69 aa)). Positions 34-53 (ERELSELIGVTRTTLREVLQ) form a DNA-binding region, H-T-H motif.

As to quaternary structure, homodimer.

It localises to the cytoplasm. Its function is as follows. Multifunctional regulator of fatty acid metabolism. The polypeptide is Fatty acid metabolism regulator protein (Shewanella amazonensis (strain ATCC BAA-1098 / SB2B)).